A 77-amino-acid chain; its full sequence is Adipokinetic prohormone type 3 (77 aa).

The N-terminal stretch at 1-22 is a signal peptide; the sequence is MQVRAVLVLAVVALVAVATSRA. Q23 is subject to Pyrrolidone carboxylic acid. Tryptophan amide is present on W30.

This sequence belongs to the AKH/HRTH/RPCH family.

Its subcellular location is the secreted. In terms of biological role, this hormone, released from cells in the corpora cardiaca, causes release of diglycerides from the fat body and stimulation of muscles to use these diglycerides as an energy source during energy-demanding processes. The chain is Adipokinetic prohormone type 3 from Locusta migratoria (Migratory locust).